We begin with the raw amino-acid sequence, 257 residues long: Acyl-[acyl-carrier-protein]--UDP-N-acetylglucosamine O-acyltransferase (257 aa).

This sequence belongs to the transferase hexapeptide repeat family. LpxA subfamily. Homotrimer.

The protein resides in the cytoplasm. It catalyses the reaction a (3R)-hydroxyacyl-[ACP] + UDP-N-acetyl-alpha-D-glucosamine = a UDP-3-O-[(3R)-3-hydroxyacyl]-N-acetyl-alpha-D-glucosamine + holo-[ACP]. Its pathway is glycolipid biosynthesis; lipid IV(A) biosynthesis; lipid IV(A) from (3R)-3-hydroxytetradecanoyl-[acyl-carrier-protein] and UDP-N-acetyl-alpha-D-glucosamine: step 1/6. Its function is as follows. Involved in the biosynthesis of lipid A, a phosphorylated glycolipid that anchors the lipopolysaccharide to the outer membrane of the cell. This chain is Acyl-[acyl-carrier-protein]--UDP-N-acetylglucosamine O-acyltransferase, found in Anaeromyxobacter sp. (strain K).